The sequence spans 238 residues: Ribonuclease PH (238 aa).

Phosphate-binding positions include R86 and 124-126; that span reads GTR.

Belongs to the RNase PH family. In terms of assembly, homohexameric ring arranged as a trimer of dimers.

It catalyses the reaction tRNA(n+1) + phosphate = tRNA(n) + a ribonucleoside 5'-diphosphate. In terms of biological role, phosphorolytic 3'-5' exoribonuclease that plays an important role in tRNA 3'-end maturation. Removes nucleotide residues following the 3'-CCA terminus of tRNAs; can also add nucleotides to the ends of RNA molecules by using nucleoside diphosphates as substrates, but this may not be physiologically important. Probably plays a role in initiation of 16S rRNA degradation (leading to ribosome degradation) during starvation. This chain is Ribonuclease PH, found in Mannheimia haemolytica (Pasteurella haemolytica).